Consider the following 1349-residue polypeptide: Zinc finger protein 804B (1349 aa).

A C2H2-type zinc finger spans residues 55 to 79 (FYCELCDKQYHKHQEFDNHINSYDH). Residues 985–1010 (YASESRNDQDSAIPRTTEKDKSKSSH) are disordered.

The polypeptide is Zinc finger protein 804B (ZNF804B) (Homo sapiens (Human)).